The primary structure comprises 219 residues: Elongation factor Ts (219 aa).

Positions 82–85 are involved in Mg(2+) ion dislocation from EF-Tu; sequence TDFV.

This sequence belongs to the EF-Ts family.

The protein localises to the cytoplasm. In terms of biological role, associates with the EF-Tu.GDP complex and induces the exchange of GDP to GTP. It remains bound to the aminoacyl-tRNA.EF-Tu.GTP complex up to the GTP hydrolysis stage on the ribosome. The sequence is that of Elongation factor Ts from Anaeromyxobacter sp. (strain K).